The sequence spans 310 residues: Thiamine-monophosphate kinase (310 aa).

Aspartate 26, threonine 40, serine 41, and aspartate 42 together coordinate Mg(2+). Aspartate 49 serves as a coordination point for substrate. Aspartate 70 and aspartate 118 together coordinate Mg(2+). ATP contacts are provided by residues 117-118 (GD) and arginine 141. Position 202 (aspartate 202) interacts with Mg(2+). Serine 204 serves as a coordination point for ATP. Residue aspartate 205 coordinates Mg(2+). Residues glutamate 251 and tryptophan 299 each coordinate substrate.

This sequence belongs to the thiamine-monophosphate kinase family.

The enzyme catalyses thiamine phosphate + ATP = thiamine diphosphate + ADP. The protein operates within cofactor biosynthesis; thiamine diphosphate biosynthesis; thiamine diphosphate from thiamine phosphate: step 1/1. Functionally, catalyzes the ATP-dependent phosphorylation of thiamine-monophosphate (TMP) to form thiamine-pyrophosphate (TPP), the active form of vitamin B1. The sequence is that of Thiamine-monophosphate kinase from Pyrococcus abyssi (strain GE5 / Orsay).